A 243-amino-acid chain; its full sequence is uncharacterized protein (243 aa).

2 stretches are compositionally biased toward basic and acidic residues: residues 1-11 (MSDEGYRELVE) and 167-178 (RNRDPPRPSYLR). 2 disordered regions span residues 1–26 (MSDE…SPDR) and 146–243 (ELYQ…CWPF). Low complexity predominate over residues 185-200 (STTTARRPRAMTSTPE).

This is an uncharacterized protein from Canis lupus familiaris (Dog).